The sequence spans 494 residues: Ectonucleoside triphosphate diphosphohydrolase 8 (494 aa).

Over 1 to 8 (MRLSWKER) the chain is Cytoplasmic. A helical membrane pass occupies residues 9 to 29 (VFMVLLGVAAASGLTMLILIL). Topologically, residues 30 to 465 (VKATNVLLPA…LTQWRAQSYS (436 aa)) are extracellular. An intrachain disulfide couples Cys78 to Cys102. Glu168 acts as the Proton acceptor in catalysis. Residues Cys245 and Cys291 are joined by a disulfide bond. Asn299 and Asn303 each carry an N-linked (GlcNAc...) asparagine glycan. Cys328 and Cys334 are joined by a disulfide. Asn362 is a glycosylation site (N-linked (GlcNAc...) asparagine). A disulfide bond links Cys380 and Cys402. A helical membrane pass occupies residues 466-486 (IWIAGVVFAVLTLVAILGAAA). Residues 487–494 (VQLFWTQD) are Cytoplasmic-facing.

The protein belongs to the GDA1/CD39 NTPase family. Requires Ca(2+) as cofactor. Mg(2+) serves as cofactor. N-glycosylated. In terms of tissue distribution, present in liver, and at lower level in jejunum and kidney. Limited to the canalicular domain of hepatocytes (at protein level).

It is found in the cell membrane. It carries out the reaction a ribonucleoside 5'-triphosphate + 2 H2O = a ribonucleoside 5'-phosphate + 2 phosphate + 2 H(+). Canalicular ectonucleoside NTPDase responsible for the main hepatic NTPDase activity. Ectonucleoside NTPDases catalyze the hydrolysis of gamma- and beta-phosphate residues of nucleotides, playing a central role in concentration of extracellular nucleotides. Has activity toward ATP, ADP, UTP and UDP, but not toward AMP. This is Ectonucleoside triphosphate diphosphohydrolase 8 (Entpd8) from Rattus norvegicus (Rat).